The sequence spans 397 residues: Elongation factor Tu-1 (397 aa).

One can recognise a tr-type G domain in the interval 10–206; that stretch reads KPHVNIGTIG…AVDEAIPEPE (197 aa). The tract at residues 19–26 is G1; it reads GHIDHGKT. Position 19-26 (19-26) interacts with GTP; sequence GHIDHGKT. A Mg(2+)-binding site is contributed by T26. The tract at residues 62–66 is G2; the sequence is GITIS. A G3 region spans residues 83-86; the sequence is DCPG. GTP contacts are provided by residues 83-87 and 138-141; these read DCPGH and NKAD. Positions 138-141 are G4; that stretch reads NKAD. The tract at residues 176–178 is G5; sequence SAL.

It belongs to the TRAFAC class translation factor GTPase superfamily. Classic translation factor GTPase family. EF-Tu/EF-1A subfamily. In terms of assembly, monomer.

Its subcellular location is the cytoplasm. The catalysed reaction is GTP + H2O = GDP + phosphate + H(+). Its function is as follows. GTP hydrolase that promotes the GTP-dependent binding of aminoacyl-tRNA to the A-site of ribosomes during protein biosynthesis. This Streptomyces coelicolor (strain ATCC BAA-471 / A3(2) / M145) protein is Elongation factor Tu-1.